Consider the following 290-residue polypeptide: Light-independent protochlorophyllide reductase iron-sulfur ATP-binding protein (290 aa).

Residues 10-15 (GIGKST) and K39 each bind ATP. Residue S14 coordinates Mg(2+). Residues C95 and C129 each contribute to the [4Fe-4S] cluster site. 180 to 181 (NR) is a binding site for ATP.

Belongs to the NifH/BchL/ChlL family. In terms of assembly, homodimer. Protochlorophyllide reductase is composed of three subunits; ChlL, ChlN and ChlB. The cofactor is [4Fe-4S] cluster.

The protein localises to the plastid. Its subcellular location is the chloroplast. The enzyme catalyses chlorophyllide a + oxidized 2[4Fe-4S]-[ferredoxin] + 2 ADP + 2 phosphate = protochlorophyllide a + reduced 2[4Fe-4S]-[ferredoxin] + 2 ATP + 2 H2O. Its pathway is porphyrin-containing compound metabolism; chlorophyll biosynthesis (light-independent). In terms of biological role, component of the dark-operative protochlorophyllide reductase (DPOR) that uses Mg-ATP and reduced ferredoxin to reduce ring D of protochlorophyllide (Pchlide) to form chlorophyllide a (Chlide). This reaction is light-independent. The L component serves as a unique electron donor to the NB-component of the complex, and binds Mg-ATP. The chain is Light-independent protochlorophyllide reductase iron-sulfur ATP-binding protein from Chaetosphaeridium globosum (Charophycean green alga).